A 231-amino-acid polypeptide reads, in one-letter code: Large ribosomal subunit protein uL1 (231 aa).

It belongs to the universal ribosomal protein uL1 family. In terms of assembly, part of the 50S ribosomal subunit.

Its function is as follows. Binds directly to 23S rRNA. The L1 stalk is quite mobile in the ribosome, and is involved in E site tRNA release. In terms of biological role, protein L1 is also a translational repressor protein, it controls the translation of the L11 operon by binding to its mRNA. The protein is Large ribosomal subunit protein uL1 of Hydrogenovibrio crunogenus (strain DSM 25203 / XCL-2) (Thiomicrospira crunogena).